A 349-amino-acid chain; its full sequence is MSSVTQLFKNNPVNRDRIIPLDFTNTKTLPDSHVWSKPEPETTSGPIPVISLSNPEEHGLLRQACEEWGVFHITDHGVSHSLLHNVDCQMKRLFSLPMHRKILAVRSPDESTGYGVVRISMFYDKLMWSEGFSVMGSSLRRHATLLWPDDHAEFCNVMEEYQKAMDDLSHRLISMLMGSLGLTHEDLGWLVPDKTGSGTDSIQSFLQLNSYPVCPDPHLAMGLAPHTDSSLLTILYQGNIPGLEIESPQEEGSRWIGVEPIEGSLVVIMGDLSHIISNGQFRSTMHRAVVNKTHHRVSAAYFAGPPKNLQIGPLTSDKNHPPIYRRLIWEEYLAAKATHFNKALTLFRC.

One can recognise a Fe2OG dioxygenase domain in the interval 201 to 305 (SIQSFLQLNS…RVSAAYFAGP (105 aa)). Positions 226, 228, and 286 each coordinate Fe cation. Residue Arg-296 is part of the active site.

The protein belongs to the iron/ascorbate-dependent oxidoreductase family. GA3OX subfamily. Requires L-ascorbate as cofactor. Fe cation serves as cofactor. In terms of tissue distribution, expressed in flower clusters and siliques.

It catalyses the reaction gibberellin A20 + 2-oxoglutarate + O2 = gibberellin A1 + succinate + CO2. The protein operates within plant hormone biosynthesis; gibberellin biosynthesis. Functionally, converts the inactive gibberellin (GA) precursors GA9 and GA20 in the bioactives gibberellins GA4 and GA1. Involved in the production of bioactive GA for reproductive development. The protein is Gibberellin 3-beta-dioxygenase 3 (GA3OX3) of Arabidopsis thaliana (Mouse-ear cress).